The chain runs to 292 residues: MSERRLLLVHAHPDDETLTTGGTIARYAADGADVHVLTCTLGEEGEVIGDEWAHLVAGAADQLGGFRIGELTSALSSLGAGRPRFLLGAGRFRDSGMAGTASAANPRAFVNADPDAVTAAIVAVIRDVRPHVVVTYDPDGGYGHPDHIQAHRIVTAAVEAAGTERFPDAGVPWDVAKLYWTVTEASALEAGLCRIGDLPDGWRLPEPGELPSVPDGDVTTVIDVRGVLDAKRNALSAHATQVTVAPSGTEYALSNDIAQPILVEEHFVLVRGALGDRDADGREWDLFAGVGH.

Residues His-12, Asp-15, and His-147 each coordinate Zn(2+).

This sequence belongs to the MshB deacetylase family. The cofactor is Zn(2+).

It carries out the reaction 1D-myo-inositol 2-acetamido-2-deoxy-alpha-D-glucopyranoside + H2O = 1D-myo-inositol 2-amino-2-deoxy-alpha-D-glucopyranoside + acetate. Functionally, catalyzes the deacetylation of 1D-myo-inositol 2-acetamido-2-deoxy-alpha-D-glucopyranoside (GlcNAc-Ins) in the mycothiol biosynthesis pathway. The sequence is that of 1D-myo-inositol 2-acetamido-2-deoxy-alpha-D-glucopyranoside deacetylase from Rhodococcus opacus (strain B4).